Consider the following 213-residue polypeptide: 3-hexulose-6-phosphate synthase 2 (213 aa).

Belongs to the HPS/KGPDC family. HPS subfamily.

The catalysed reaction is D-ribulose 5-phosphate + formaldehyde = D-arabino-hex-3-ulose 6-phosphate. Its pathway is one-carbon metabolism; formaldehyde assimilation via RuMP pathway; D-fructose 6-phosphate from D-ribulose 5-phosphate and formaldehyde: step 1/2. Functionally, catalyzes the condensation of ribulose 5-phosphate with formaldehyde to form 3-hexulose 6-phosphate. The sequence is that of 3-hexulose-6-phosphate synthase 2 from Staphylococcus saprophyticus subsp. saprophyticus (strain ATCC 15305 / DSM 20229 / NCIMB 8711 / NCTC 7292 / S-41).